A 157-amino-acid chain; its full sequence is Ribosome maturation factor RimP (157 aa).

Belongs to the RimP family.

Its subcellular location is the cytoplasm. In terms of biological role, required for maturation of 30S ribosomal subunits. In Geobacillus sp. (strain WCH70), this protein is Ribosome maturation factor RimP.